Here is a 283-residue protein sequence, read N- to C-terminus: MKDMPTWIDEYHKGSRFGLNGKVLLKKNSKYQEILIIETDFYGKALMLDGCWMTSVRDEKYYHECLVHPALSSIDKKSHILIIGGGDGGTARECLKYSQVSKIDLVEIDEEVIKVSKTFLKEIGGGAWSDKRLAIHIDDGVKWVETTKDNSYDVIFIDCSDPSEFSNLLFTDSFYKECKRILTKKGILATQSESPESFENIHIHILKSLNKIFKLSETMYSFVPIYPSGIWSWTFASDEELNLSKVNYKEVMEIENNCDVWNLNFQNAAFKMMPNKIVKKLNS.

A PABS domain is found at 5–238 (PTWIDEYHKG…GIWSWTFASD (234 aa)). Q32 is a binding site for S-methyl-5'-thioadenosine. Spermidine contacts are provided by H63 and D87. Residues E107 and 139–140 (DG) each bind S-methyl-5'-thioadenosine. D158 acts as the Proton acceptor in catalysis. 158–161 (DCSD) provides a ligand contact to spermidine.

The protein belongs to the spermidine/spermine synthase family. As to quaternary structure, homodimer or homotetramer.

It localises to the cytoplasm. It catalyses the reaction S-adenosyl 3-(methylsulfanyl)propylamine + putrescine = S-methyl-5'-thioadenosine + spermidine + H(+). Its pathway is amine and polyamine biosynthesis; spermidine biosynthesis; spermidine from putrescine: step 1/1. Functionally, catalyzes the irreversible transfer of a propylamine group from the amino donor S-adenosylmethioninamine (decarboxy-AdoMet) to putrescine (1,4-diaminobutane) to yield spermidine. This chain is Polyamine aminopropyltransferase, found in Prochlorococcus marinus subsp. pastoris (strain CCMP1986 / NIES-2087 / MED4).